Reading from the N-terminus, the 240-residue chain is CD302 antigen (240 aa).

The region spanning 40-160 (FQDSCYIFLQ…CEVSSVEGTL (121 aa)) is the C-type lectin domain. Asparagine 117 carries an N-linked (GlcNAc...) asparagine glycan. Cysteine 136 and cysteine 151 are disulfide-bonded. The helical transmembrane segment at 177–197 (ILISALVIASTVILTVLGAVI) threads the bilayer. At 198–240 (WFLYKRNLDSGFTTVFSTAPQSPFNDDCVLVVAEENEYAVQFD) the chain is on the cytoplasmic side.

The protein localises to the membrane. The protein resides in the cell projection. Its subcellular location is the filopodium. It is found in the cytoplasm. It localises to the cell cortex. Its function is as follows. Potential multifunctional C-type lectin receptor that may play roles in endocytosis and phagocytosis as well as in cell adhesion and migration. This chain is CD302 antigen, found in Sus scrofa (Pig).